Reading from the N-terminus, the 565-residue chain is Inositol-3-phosphate synthase (565 aa).

Residues glycine 70, glycine 71, asparagine 72, asparagine 73, aspartate 144, serine 180, isoleucine 181, glutamine 191, arginine 194, threonine 231, alanine 232, asparagine 233, threonine 234, glycine 282, serine 283, aspartate 307, serine 310, asparagine 341, asparagine 342, aspartate 343, lysine 356, glycine 394, aspartate 395, aspartate 423, and serine 424 each coordinate NAD(+). Position 536 is a phosphoserine (serine 536). The disordered stretch occupies residues 546–565; it reads LHANGHSNGSAKLATNGNGH. The segment covering 550–565 has biased composition (polar residues); it reads GHSNGSAKLATNGNGH.

Belongs to the myo-inositol 1-phosphate synthase family. The cofactor is NAD(+). As to expression, higher expression in adult heads than bodies.

It is found in the cytoplasm. The catalysed reaction is D-glucose 6-phosphate = 1D-myo-inositol 3-phosphate. The protein operates within polyol metabolism; myo-inositol biosynthesis; myo-inositol from D-glucose 6-phosphate: step 1/2. Its function is as follows. Key enzyme in myo-inositol biosynthesis pathway that catalyzes the conversion of glucose 6-phosphate to 1-myo-inositol 1-phosphate in a NAD-dependent manner. Rate-limiting enzyme in the synthesis of all inositol-containing compounds. In Drosophila melanogaster (Fruit fly), this protein is Inositol-3-phosphate synthase (Inos).